Here is a 344-residue protein sequence, read N- to C-terminus: L-lactate dehydrogenase B (344 aa).

NAD(+) contacts are provided by residues 62 to 67 and R109; that span reads DALPDK. Substrate contacts are provided by R116, N148, and R179. N148 is a binding site for NAD(+). Catalysis depends on H203, which acts as the Proton acceptor. Substrate is bound at residue T258.

It belongs to the LDH/MDH superfamily. LDH family. Tetramer that arise from random association of LDH-A and LDH-B.

It catalyses the reaction (S)-lactate + NAD(+) = pyruvate + NADH + H(+). The protein operates within fermentation; pyruvate fermentation to lactate; (S)-lactate from pyruvate: step 1/1. The protein is L-lactate dehydrogenase B of Hordeum vulgare (Barley).